A 1342-amino-acid polypeptide reads, in one-letter code: DNA-directed RNA polymerase subunit beta (1342 aa).

This sequence belongs to the RNA polymerase beta chain family. The RNAP catalytic core consists of 2 alpha, 1 beta, 1 beta' and 1 omega subunit. When a sigma factor is associated with the core the holoenzyme is formed, which can initiate transcription.

It carries out the reaction RNA(n) + a ribonucleoside 5'-triphosphate = RNA(n+1) + diphosphate. Its function is as follows. DNA-dependent RNA polymerase catalyzes the transcription of DNA into RNA using the four ribonucleoside triphosphates as substrates. The chain is DNA-directed RNA polymerase subunit beta from Photorhabdus laumondii subsp. laumondii (strain DSM 15139 / CIP 105565 / TT01) (Photorhabdus luminescens subsp. laumondii).